The following is a 231-amino-acid chain: Probable transglycosylase SceD (231 aa).

An N-terminal signal peptide occupies residues 1–27; the sequence is MKKTLLASSLAVGLGIVAGNAGHEAHA. The span at 103-116 shows a compositional bias: polar residues; the sequence is APSAVQANQVQSQE. Positions 103 to 153 are disordered; it reads APSAVQANQVQSQEVEAPQNAQTQQPQASTSNNSQVTATPTESKSSEGSSV. Low complexity predominate over residues 119–137; sequence APQNAQTQQPQASTSNNSQ. Residues 138–153 show a composition bias toward polar residues; that stretch reads VTATPTESKSSEGSSV.

Belongs to the transglycosylase family. SceD subfamily.

It localises to the secreted. Functionally, is able to cleave peptidoglycan and affects clumping and separation of bacterial cells. In Staphylococcus aureus (strain COL), this protein is Probable transglycosylase SceD (sceD).